A 901-amino-acid polypeptide reads, in one-letter code: Protein translocase subunit SecA (901 aa).

Residues Gln-85, 103–107 (GEGKT), and Asp-492 each bind ATP. The segment at 828 to 901 (GLVTDDGGNP…PKNRRNKKRR (74 aa)) is disordered. Residues 871 to 881 (DGQKPRGEGNR) show a composition bias toward basic and acidic residues. Residues 882-901 (AARRSAASKKPKNRRNKKRR) are compositionally biased toward basic residues.

The protein belongs to the SecA family. In terms of assembly, monomer and homodimer. Part of the essential Sec protein translocation apparatus which comprises SecA, SecYEG and auxiliary proteins SecDF. Other proteins may also be involved.

The protein resides in the cell membrane. It is found in the cytoplasm. The enzyme catalyses ATP + H2O + cellular proteinSide 1 = ADP + phosphate + cellular proteinSide 2.. In terms of biological role, part of the Sec protein translocase complex. Interacts with the SecYEG preprotein conducting channel. Has a central role in coupling the hydrolysis of ATP to the transfer of proteins into and across the cell membrane, serving as an ATP-driven molecular motor driving the stepwise translocation of polypeptide chains across the membrane. The protein is Protein translocase subunit SecA of Cutibacterium acnes (strain DSM 16379 / KPA171202) (Propionibacterium acnes).